The chain runs to 294 residues: MTKAVLTSISQLALKALLYEVSLSPKPGLVDRFDNGAHDDMSFMTFIDSMIALSPFFQAYIETGFAYAKEEPLLLFNRLRQLGQKAEETMFCATQGINTHKGLNFSMALLLGTTGAYLARTPHLMTDLGRFSKEDTLAICRLVKPMTAHLIQTDLGHLNTKKEFTYGEQLFVTYGIKGPRGEASEGFTTLTDHALPYFRQMISQNDPETSQLRLLVYLMSIVEDGNLIHRGGIEAWKGVKADMRLLLQQDLSTTDLRLALSSYNQCLINQHLSPGGAADLLALTFYFAFLEKLL.

It belongs to the CitG/MdcB family.

The catalysed reaction is 3'-dephospho-CoA + ATP = 2'-(5''-triphospho-alpha-D-ribosyl)-3'-dephospho-CoA + adenine. The protein is Probable 2-(5''-triphosphoribosyl)-3'-dephosphocoenzyme-A synthase of Streptococcus pyogenes serotype M2 (strain MGAS10270).